We begin with the raw amino-acid sequence, 538 residues long: Cytochrome P450 52A4 (538 aa).

The helical transmembrane segment at 27-46 threads the bilayer; that stretch reads WYILIPTILLTLNFLSILHT. A heme-binding site is contributed by cysteine 485.

It belongs to the cytochrome P450 family. It depends on heme as a cofactor.

Its subcellular location is the membrane. In terms of biological role, together with an NADPH cytochrome P450 the enzyme system catalyzes the terminal hydroxylation as the first step in the assimilation of alkanes and fatty acids. The protein is Cytochrome P450 52A4 (CYP52A4) of Candida maltosa (Yeast).